A 121-amino-acid chain; its full sequence is Large ribosomal subunit protein uL22 (121 aa).

Belongs to the universal ribosomal protein uL22 family. As to quaternary structure, part of the 50S ribosomal subunit.

Functionally, this protein binds specifically to 23S rRNA; its binding is stimulated by other ribosomal proteins, e.g. L4, L17, and L20. It is important during the early stages of 50S assembly. It makes multiple contacts with different domains of the 23S rRNA in the assembled 50S subunit and ribosome. In terms of biological role, the globular domain of the protein is located near the polypeptide exit tunnel on the outside of the subunit, while an extended beta-hairpin is found that lines the wall of the exit tunnel in the center of the 70S ribosome. This chain is Large ribosomal subunit protein uL22, found in Rickettsia massiliae (strain Mtu5).